The sequence spans 729 residues: Cellulose synthase-like protein E1 (729 aa).

2 consecutive transmembrane segments (helical) span residues 29 to 49 and 64 to 84; these read VIAYRFFSASVFVCICLIWFY and LIWFVMFIVEIWFGLYWVVTQ. Active-site residues include Asp152 and Asp443. A run of 5 helical transmembrane segments spans residues 526 to 546, 553 to 573, 644 to 664, 680 to 700, and 709 to 729; these read LPVLIYSVLTSLCLFKGIPLF, WFIPFGYVTVAATAYSLAEFL, MFLVLGTLGMLNLFCFAAAVA, QFVITGVLVVINWPLYKGMLL, and MSVTVKSVVLALSACTCLAFL.

This sequence belongs to the glycosyltransferase 2 family. Plant cellulose synthase-like E subfamily.

It is found in the golgi apparatus membrane. Its function is as follows. Thought to be a Golgi-localized beta-glycan synthase that polymerize the backbones of noncellulosic polysaccharides (hemicelluloses) of plant cell wall. The chain is Cellulose synthase-like protein E1 (CSLE1) from Arabidopsis thaliana (Mouse-ear cress).